The sequence spans 90 residues: Cell division topological specificity factor (90 aa).

It belongs to the MinE family.

Prevents the cell division inhibition by proteins MinC and MinD at internal division sites while permitting inhibition at polar sites. This ensures cell division at the proper site by restricting the formation of a division septum at the midpoint of the long axis of the cell. This chain is Cell division topological specificity factor, found in Clostridium perfringens (strain ATCC 13124 / DSM 756 / JCM 1290 / NCIMB 6125 / NCTC 8237 / Type A).